The chain runs to 62 residues: Teretoxin Tan1.1 (62 aa).

The N-terminal stretch at 1–21 (MSCFPVLFVMMLLVSQSVWAF) is a signal peptide. A propeptide spanning residues 22-38 (PGPETRDGSVQDAESRR) is cleaved from the precursor.

This sequence belongs to the teretoxin A (TA) superfamily. In terms of processing, contains 2 disulfide bonds. As to expression, expressed by the venom duct.

The protein localises to the secreted. The sequence is that of Teretoxin Tan1.1 from Terebra anilis (Auger snail).